The following is a 365-amino-acid chain: MSAIYNFCAGPAMLPAAVMKKAQQELLDWNGLGVSVMEVSHRGKEFIALTKQAEADLRELMHIPQNYHVLFMHGGGRGQFSAVVNNFLGNQGRALYLVSGQWSSAALAEAQKLAGDAQIDSLNIVEKHNCLNAVVLPDLHKIDADYRYVHYCPNETVDGIEIFDELDSPWPIVADLSSTIMSREIDVSRYGLIYAGAQKNIGPSGLSIVIVRDDMLTLPSLPQSSIMDYRLAVEHDSMFNTPPTFAWYLAAEVFAWLKSIGGVASIAKINQQKAQMLYACIDANPFYKNGVVAANRSQMNVTFQLADESLDGAFLKEAEAVGLVALKGHRIVGGMRASLYNAMPLEGVAALVTFMNEFAAKHYNI.

Arg-42 contributes to the L-glutamate binding site. Residues 76-77, Trp-102, Thr-156, Asp-175, and Gln-198 contribute to the pyridoxal 5'-phosphate site; that span reads GR. At Lys-199 the chain carries N6-(pyridoxal phosphate)lysine. Residue 240-241 participates in pyridoxal 5'-phosphate binding; the sequence is NT.

The protein belongs to the class-V pyridoxal-phosphate-dependent aminotransferase family. SerC subfamily. Homodimer. It depends on pyridoxal 5'-phosphate as a cofactor.

Its subcellular location is the cytoplasm. The enzyme catalyses O-phospho-L-serine + 2-oxoglutarate = 3-phosphooxypyruvate + L-glutamate. It catalyses the reaction 4-(phosphooxy)-L-threonine + 2-oxoglutarate = (R)-3-hydroxy-2-oxo-4-phosphooxybutanoate + L-glutamate. The protein operates within amino-acid biosynthesis; L-serine biosynthesis; L-serine from 3-phospho-D-glycerate: step 2/3. It functions in the pathway cofactor biosynthesis; pyridoxine 5'-phosphate biosynthesis; pyridoxine 5'-phosphate from D-erythrose 4-phosphate: step 3/5. Its function is as follows. Catalyzes the reversible conversion of 3-phosphohydroxypyruvate to phosphoserine and of 3-hydroxy-2-oxo-4-phosphonooxybutanoate to phosphohydroxythreonine. The protein is Phosphoserine aminotransferase of Shewanella oneidensis (strain ATCC 700550 / JCM 31522 / CIP 106686 / LMG 19005 / NCIMB 14063 / MR-1).